Reading from the N-terminus, the 438-residue chain is Drainin (438 aa).

The stretch at 54 to 104 (PKSQEEVLKHQREYEEIQRKAKKTLEREAKEKEKLDAIRKEKERSLIDARK) forms a coiled coil. In terms of domain architecture, Rab-GAP TBC spans 133 to 374 (GLPPAVRGKI…RIWDLVFIEG (242 aa)).

The protein resides in the contractile vacuole membrane. The protein localises to the cytoplasm. In terms of biological role, may act as a GTPase-activating protein for Rab family protein(s). Required for osmotic regulation by the contractile vacuole in hypo-osmotic environments. Essential for periodic fusion of the contractile vacuole with the plasma membrane and consequent expulsion of water from the cell body. The protein is Drainin (phgA) of Dictyostelium discoideum (Social amoeba).